Here is a 130-residue protein sequence, read N- to C-terminus: Sulfurtransferase TusD (130 aa).

The active-site Cysteine persulfide intermediate is Cys78.

It belongs to the DsrE/TusD family. Heterohexamer, formed by a dimer of trimers. The hexameric TusBCD complex contains 2 copies each of TusB, TusC and TusD. The TusBCD complex interacts with TusE.

It localises to the cytoplasm. Part of a sulfur-relay system required for 2-thiolation of 5-methylaminomethyl-2-thiouridine (mnm(5)s(2)U) at tRNA wobble positions. Accepts sulfur from TusA and transfers it in turn to TusE. The chain is Sulfurtransferase TusD from Buchnera aphidicola subsp. Baizongia pistaciae (strain Bp).